Reading from the N-terminus, the 131-residue chain is MAKASSRGGGKKKVKRTVSDGVAHINATFNNTLITITDRQGNALSWASAGGSGFKGSRKSTPFAAQVASETAARAAQDYGLKNVEVRVKGPGPGRESAVRALNAVGYRITNISDVSPIPHNGCRPPKKRRV.

It belongs to the universal ribosomal protein uS11 family. In terms of assembly, part of the 30S ribosomal subunit. Interacts with proteins S7 and S18. Binds to IF-3.

Functionally, located on the platform of the 30S subunit, it bridges several disparate RNA helices of the 16S rRNA. Forms part of the Shine-Dalgarno cleft in the 70S ribosome. The chain is Small ribosomal subunit protein uS11 from Halorhodospira halophila (strain DSM 244 / SL1) (Ectothiorhodospira halophila (strain DSM 244 / SL1)).